A 96-amino-acid polypeptide reads, in one-letter code: Co-chaperonin GroES (96 aa).

Belongs to the GroES chaperonin family. As to quaternary structure, heptamer of 7 subunits arranged in a ring. Interacts with the chaperonin GroEL.

The protein localises to the cytoplasm. Together with the chaperonin GroEL, plays an essential role in assisting protein folding. The GroEL-GroES system forms a nano-cage that allows encapsulation of the non-native substrate proteins and provides a physical environment optimized to promote and accelerate protein folding. GroES binds to the apical surface of the GroEL ring, thereby capping the opening of the GroEL channel. This Cupriavidus necator (strain ATCC 17699 / DSM 428 / KCTC 22496 / NCIMB 10442 / H16 / Stanier 337) (Ralstonia eutropha) protein is Co-chaperonin GroES.